Consider the following 372-residue polypeptide: Solute carrier family 35 member F6 (372 aa).

The signal sequence occupies residues 1 to 18 (MAWTKYQLFLAGLMLVTG). The next 2 membrane-spanning stretches (helical) occupy residues 48–68 (FVQA…FYLL) and 89–109 (LLFL…YVAL). Residues 105–160 (MYVALNMTSASSFQMLRGAVIIFTGLFSVAFLDRRLAPSQWLGILITIAGLVVVGL) form the EamA domain. A glycan (N-linked (GlcNAc...) asparagine) is linked at Asn-110. The next 7 helical transmembrane spans lie at 116-136 (SFQM…VAFL), 145-165 (WLGI…DLLS), 176-196 (VITG…QMVL), 211-231 (AVGI…VPMF), 261-281 (LIAL…FSGI), 293-312 (MVLD…ALGW), and 320-336 (ILGF…YNGL). Residue Thr-366 is modified to Phosphothreonine.

It belongs to the SLC35F solute transporter family. In terms of assembly, interacts with SLC25A5.

It localises to the mitochondrion. The protein resides in the lysosome membrane. Functionally, involved in the maintenance of mitochondrial membrane potential in pancreatic ductal adenocarcinoma (PDAC) cells. Promotes pancreatic ductal adenocarcinoma (PDAC) cell growth. May play a role as a nucleotide-sugar transporter. This Mus musculus (Mouse) protein is Solute carrier family 35 member F6 (Slc35f6).